The primary structure comprises 366 residues: Inactive PGL/p-HBAD biosynthesis glycosyltransferase Mb2982c (366 aa).

Disordered stretches follow at residues 1 to 23 (MEETSVAGDPGPDAGTSTAPNAA) and 295 to 366 (DGDR…HGGP). A compositionally biased stretch (basic and acidic residues) spans 295-311 (DGDRGHRWPEPPEERAG).

This sequence belongs to the UDP-glycosyltransferase family.

The chain is Inactive PGL/p-HBAD biosynthesis glycosyltransferase Mb2982c from Mycobacterium bovis (strain ATCC BAA-935 / AF2122/97).